A 736-amino-acid polypeptide reads, in one-letter code: Phosphoribosylformylglycinamidine synthase subunit PurL (736 aa).

The active site involves His49. ATP is bound by residues Tyr52 and Lys91. Glu93 contributes to the Mg(2+) binding site. Substrate is bound by residues 94-97 (SHNH) and Arg116. His95 acts as the Proton acceptor in catalysis. Position 117 (Asp117) interacts with Mg(2+). Position 240 (Gln240) interacts with substrate. Asp268 serves as a coordination point for Mg(2+). 312–314 (ESQ) contacts substrate. Positions 493 and 530 each coordinate ATP. Asn531 contributes to the Mg(2+) binding site. Ser533 contacts substrate.

It belongs to the FGAMS family. In terms of assembly, monomer. Part of the FGAM synthase complex composed of 1 PurL, 1 PurQ and 2 PurS subunits.

It is found in the cytoplasm. The enzyme catalyses N(2)-formyl-N(1)-(5-phospho-beta-D-ribosyl)glycinamide + L-glutamine + ATP + H2O = 2-formamido-N(1)-(5-O-phospho-beta-D-ribosyl)acetamidine + L-glutamate + ADP + phosphate + H(+). The protein operates within purine metabolism; IMP biosynthesis via de novo pathway; 5-amino-1-(5-phospho-D-ribosyl)imidazole from N(2)-formyl-N(1)-(5-phospho-D-ribosyl)glycinamide: step 1/2. Part of the phosphoribosylformylglycinamidine synthase complex involved in the purines biosynthetic pathway. Catalyzes the ATP-dependent conversion of formylglycinamide ribonucleotide (FGAR) and glutamine to yield formylglycinamidine ribonucleotide (FGAM) and glutamate. The FGAM synthase complex is composed of three subunits. PurQ produces an ammonia molecule by converting glutamine to glutamate. PurL transfers the ammonia molecule to FGAR to form FGAM in an ATP-dependent manner. PurS interacts with PurQ and PurL and is thought to assist in the transfer of the ammonia molecule from PurQ to PurL. The chain is Phosphoribosylformylglycinamidine synthase subunit PurL from Rhodopseudomonas palustris (strain BisB18).